The following is a 964-amino-acid chain: Probable outer membrane protein PmpE (964 aa).

A signal peptide spans 1 to 18 (MKKAFFFFLIGNSLSGLA). Residues 683-964 (LTPSGHPFWG…YLNGEIALRF (282 aa)) enclose the Autotransporter domain.

It belongs to the PMP outer membrane protein family.

The protein resides in the secreted. It localises to the cell wall. Its subcellular location is the cell outer membrane. This Chlamydia trachomatis serovar D (strain ATCC VR-885 / DSM 19411 / UW-3/Cx) protein is Probable outer membrane protein PmpE (pmpE).